The sequence spans 238 residues: Ribitol-5-phosphate cytidylyltransferase (238 aa).

Residues 7-10 (LAGG) and 81-87 (GDDRNHS) each bind CTP.

It belongs to the IspD/TarI cytidylyltransferase family. TarI subfamily.

It carries out the reaction D-ribitol 5-phosphate + CTP + H(+) = CDP-L-ribitol + diphosphate. Its pathway is cell wall biogenesis; poly(ribitol phosphate) teichoic acid biosynthesis. Catalyzes the transfer of the cytidylyl group of CTP to D-ribitol 5-phosphate. In Staphylococcus epidermidis (strain ATCC 12228 / FDA PCI 1200), this protein is Ribitol-5-phosphate cytidylyltransferase.